The primary structure comprises 110 residues: Protein YcgL (110 aa).

In terms of domain architecture, YcgL spans 14 to 98 (MFCVIYRSSK…PPEDLLKQHL (85 aa)). The tract at residues 88-110 (PPPEDLLKQHLSSVGQNTSHADR) is disordered. The segment covering 97–110 (HLSSVGQNTSHADR) has biased composition (polar residues).

This Salmonella typhi protein is Protein YcgL.